Reading from the N-terminus, the 490-residue chain is GTPase Der (490 aa).

Residues 3–166 (PVIALVGRPN…IALSEFPKDD (164 aa)) form the EngA-type G 1 domain. Residues 9–16 (GRPNVGKS), 56–60 (DTGGI), and 118–121 (NKVD) contribute to the GTP site. Residues 164–191 (KDDADEPEEGEEEIVAEGEEAKRIPGPS) form a disordered region. The span at 166-181 (DADEPEEGEEEIVAEG) shows a compositional bias: acidic residues. Over residues 182-191 (EEAKRIPGPS) the composition is skewed to basic and acidic residues. Residues 196 to 369 (IKIAIIGRPN…SVQNSFKSAV (174 aa)) enclose the EngA-type G 2 domain. GTP contacts are provided by residues 202-209 (GRPNVGKS), 249-253 (DTAGV), and 314-317 (NKWD). A KH-like domain is found at 370-454 (TRWPTSRLTQ…PIRIEFKGGE (85 aa)). A disordered region spans residues 452–490 (GGENPYEGNKNTLTDRQVNKKRRLMSHHKKADKKRRDKR). Residues 470-490 (NKKRRLMSHHKKADKKRRDKR) are compositionally biased toward basic residues.

It belongs to the TRAFAC class TrmE-Era-EngA-EngB-Septin-like GTPase superfamily. EngA (Der) GTPase family. As to quaternary structure, associates with the 50S ribosomal subunit.

Functionally, GTPase that plays an essential role in the late steps of ribosome biogenesis. The protein is GTPase Der of Pseudomonas fluorescens (strain ATCC BAA-477 / NRRL B-23932 / Pf-5).